The following is a 744-amino-acid chain: Cytosolic neutral trehalase (744 aa).

Positions 99, 101, 103, 105, and 110 each coordinate Ca(2+). Substrate-binding positions include Arg286, 293–294 (WD), Asn330, 339–341 (RSQ), Glu406, Arg455, and Gly458. Active-site proton donor/acceptor residues include Asp460 and Glu665.

Belongs to the glycosyl hydrolase 37 family. Ca(2+) serves as cofactor.

The protein localises to the cytoplasm. The catalysed reaction is alpha,alpha-trehalose + H2O = alpha-D-glucose + beta-D-glucose. Its pathway is carbohydrate degradation. In terms of biological role, hydrolyzes intracellular trehalose to glucose. This chain is Cytosolic neutral trehalase, found in Neurospora crassa (strain ATCC 24698 / 74-OR23-1A / CBS 708.71 / DSM 1257 / FGSC 987).